Consider the following 93-residue polypeptide: uncharacterized protein (93 aa).

Transmembrane regions (helical) follow at residues 15-35 (MAGL…VMLV), 48-68 (ILAI…IYQI), and 72-92 (LSYA…AGVH).

It is found in the cell membrane. This is an uncharacterized protein from Bacillus subtilis (strain 168).